We begin with the raw amino-acid sequence, 340 residues long: Beta-ketoacyl-[acyl-carrier-protein] synthase III (340 aa).

Active-site residues include Cys-119 and His-260. The ACP-binding stretch occupies residues 261 to 265; sequence QANYR. The active site involves Asn-290.

The protein belongs to the thiolase-like superfamily. FabH family. As to quaternary structure, homodimer.

Its subcellular location is the cytoplasm. It catalyses the reaction malonyl-[ACP] + acetyl-CoA + H(+) = 3-oxobutanoyl-[ACP] + CO2 + CoA. The protein operates within lipid metabolism; fatty acid biosynthesis. Functionally, catalyzes the condensation reaction of fatty acid synthesis by the addition to an acyl acceptor of two carbons from malonyl-ACP. Catalyzes the first condensation reaction which initiates fatty acid synthesis and may therefore play a role in governing the total rate of fatty acid production. Possesses both acetoacetyl-ACP synthase and acetyl transacylase activities. Its substrate specificity determines the biosynthesis of branched-chain and/or straight-chain of fatty acids. This is Beta-ketoacyl-[acyl-carrier-protein] synthase III from Sulfurovum sp. (strain NBC37-1).